The primary structure comprises 269 residues: Phycobilisome 37.5 kDa linker polypeptide, phycocyanin-associated, rod (269 aa).

The PBS-linker domain maps to 2–177; the sequence is TSSTAARQLG…IYRGYANSDR (176 aa). In terms of domain architecture, CpcD-like spans 217–269; sequence GQLYRVRVIQADRGRTTQIRRSIQEYLVSYDQLSPTLQRLNQRGSRVVNISPA.

This sequence belongs to the phycobilisome linker protein family.

The protein localises to the cellular thylakoid membrane. Its function is as follows. Rod linker protein, associated with phycocyanin. Linker polypeptides determine the state of aggregation and the location of the disk-shaped phycobiliprotein units within the phycobilisome and modulate their spectroscopic properties in order to mediate a directed and optimal energy transfer. The protein is Phycobilisome 37.5 kDa linker polypeptide, phycocyanin-associated, rod (cpcH2) of Microchaete diplosiphon (Fremyella diplosiphon).